A 132-amino-acid chain; its full sequence is MDVTRLLLATLLVFLCFFTANSHLPPEEKLRDDRSLRSNSSVNLLDVPSVSIVALNKKSKQIGRKAAEKKRSSKKEASMKKVVRPRTPLSAPCVATRNSCKPPAPACCDPCASCQCRFFRSACSCRVLSLNC.

Positions M1–S22 are cleaved as a signal peptide. Residue N39 is glycosylated (N-linked (GlcNAc...) asparagine). Residues I62–P85 form a disordered region. Basic and acidic residues predominate over residues K65–M79. 5 disulfide bridges follow: C93/C108, C100/C114, C107/C125, C111/C132, and C116/C123. One can recognise an Agouti domain in the interval C93 to C132.

In terms of tissue distribution, widely expressed at low levels. Highly expressed in the skin. Expressed in adipose tissue.

It localises to the secreted. Its function is as follows. Involved in the regulation of melanogenesis. The binding of ASP to MC1R precludes alpha-MSH initiated signaling and thus blocks production of cAMP, leading to a down-regulation of eumelanogenesis (brown/black pigment) and thus increasing synthesis of pheomelanin (yellow/red pigment). In higher primates, agouti may affect the quality of hair pigmentation rather than its pattern of deposition. Could well play a role in neuroendocrine aspects of melanocortin action. May have some functional role in regulating the lipid metabolism with adipocytes. The sequence is that of Agouti-signaling protein (ASIP) from Homo sapiens (Human).